A 249-amino-acid chain; its full sequence is tRNA (guanine-N(1)-)-methyltransferase (249 aa).

S-adenosyl-L-methionine is bound by residues Gly113 and 133 to 138 (IGDFVL).

The protein belongs to the RNA methyltransferase TrmD family. In terms of assembly, homodimer.

Its subcellular location is the cytoplasm. The catalysed reaction is guanosine(37) in tRNA + S-adenosyl-L-methionine = N(1)-methylguanosine(37) in tRNA + S-adenosyl-L-homocysteine + H(+). In terms of biological role, specifically methylates guanosine-37 in various tRNAs. The protein is tRNA (guanine-N(1)-)-methyltransferase of Aliivibrio salmonicida (strain LFI1238) (Vibrio salmonicida (strain LFI1238)).